The chain runs to 284 residues: Bifunctional protein FolD (284 aa).

Residues 164-166 (GRG), Ser-189, and Ile-230 each bind NADP(+).

The protein belongs to the tetrahydrofolate dehydrogenase/cyclohydrolase family. Homodimer.

It catalyses the reaction (6R)-5,10-methylene-5,6,7,8-tetrahydrofolate + NADP(+) = (6R)-5,10-methenyltetrahydrofolate + NADPH. It carries out the reaction (6R)-5,10-methenyltetrahydrofolate + H2O = (6R)-10-formyltetrahydrofolate + H(+). The protein operates within one-carbon metabolism; tetrahydrofolate interconversion. Catalyzes the oxidation of 5,10-methylenetetrahydrofolate to 5,10-methenyltetrahydrofolate and then the hydrolysis of 5,10-methenyltetrahydrofolate to 10-formyltetrahydrofolate. The polypeptide is Bifunctional protein FolD (Desulforamulus reducens (strain ATCC BAA-1160 / DSM 100696 / MI-1) (Desulfotomaculum reducens)).